Consider the following 235-residue polypeptide: 1-(5-phosphoribosyl)-5-[(5-phosphoribosylamino)methylideneamino] imidazole-4-carboxamide isomerase (235 aa).

The active-site Proton acceptor is the D8. Residue D128 is the Proton donor of the active site.

Belongs to the HisA/HisF family.

The protein localises to the cytoplasm. The catalysed reaction is 1-(5-phospho-beta-D-ribosyl)-5-[(5-phospho-beta-D-ribosylamino)methylideneamino]imidazole-4-carboxamide = 5-[(5-phospho-1-deoxy-D-ribulos-1-ylimino)methylamino]-1-(5-phospho-beta-D-ribosyl)imidazole-4-carboxamide. It functions in the pathway amino-acid biosynthesis; L-histidine biosynthesis; L-histidine from 5-phospho-alpha-D-ribose 1-diphosphate: step 4/9. The protein is 1-(5-phosphoribosyl)-5-[(5-phosphoribosylamino)methylideneamino] imidazole-4-carboxamide isomerase of Thermus thermophilus (strain ATCC 27634 / DSM 579 / HB8).